Consider the following 779-residue polypeptide: Ribosome-releasing factor 2, mitochondrial (779 aa).

Residues 68-353 enclose the tr-type G domain; that stretch reads AKIRNIGIMA…AVTTYLPSPE (286 aa). GTP is bound by residues 77 to 84, 141 to 145, and 195 to 198; these read AHIDAGKT, DTPGH, and NKMD.

This sequence belongs to the TRAFAC class translation factor GTPase superfamily. Classic translation factor GTPase family. EF-G/EF-2 subfamily.

The protein resides in the mitochondrion. The enzyme catalyses GTP + H2O = GDP + phosphate + H(+). Functionally, mitochondrial GTPase that mediates the disassembly of ribosomes from messenger RNA at the termination of mitochondrial protein biosynthesis. Acts in collaboration with MRRF. GTP hydrolysis follows the ribosome disassembly and probably occurs on the ribosome large subunit. Not involved in the GTP-dependent ribosomal translocation step during translation elongation. The polypeptide is Ribosome-releasing factor 2, mitochondrial (Gfm2) (Mus musculus (Mouse)).